The primary structure comprises 336 residues: MAQMSMTVEKSIKADVTVSHDRVKRAYVTFLAGNKDYWMGVVGLAKGLRKVKSAYPLVVAILPDVPEEHRQILLAQGCIIREIEPVYPPENKTGYSMAYYVINYSKLRIWEFVEYEKMIYLDGDIQVFSNIDHLFDTPRGYLYAVKDCFCEISWSKTPQFKIGYCQQCPEKVTWPVESLGSPPPVYFNAGMLVFEPNLLTYEDLLRVVQITTPTYFAEQDFLNEYFTDIYKPIPSTYNLVMAMLWRHPEHIDLDQISVIHYCANGSKPWRFDETEEHMDREDIKMLVKKWWDIYEDSSLDYKNFVETESKLSPINATLASKESVGDVLISLAPSAA.

Residue Lys-106 is part of the active site. The Mn(2+) site is built by Asp-122, Asp-124, and His-260.

Belongs to the glycosyltransferase 8 family. Galactosyltransferase subfamily. It depends on a divalent metal cation as a cofactor.

The protein resides in the cytoplasm. The catalysed reaction is myo-inositol + UDP-alpha-D-galactose = alpha-D-galactosyl-(1-&gt;3)-1D-myo-inositol + UDP + H(+). Its function is as follows. Galactinol synthase involved in the biosynthesis of raffinose family oligosaccharides (RFOs) that function as osmoprotectants. May promote plant stress tolerance. The polypeptide is Galactinol synthase 6 (GOLS6) (Arabidopsis thaliana (Mouse-ear cress)).